The following is a 69-amino-acid chain: MNQPSLDELLEKVDSRYTLVVVAAKRARELTERGKTKADGAAVMKPVTAALMEIAQNKVGYKRTRSGIK.

It belongs to the RNA polymerase subunit omega family. As to quaternary structure, the RNAP catalytic core consists of 2 alpha, 1 beta, 1 beta' and 1 omega subunit. When a sigma factor is associated with the core the holoenzyme is formed, which can initiate transcription.

The catalysed reaction is RNA(n) + a ribonucleoside 5'-triphosphate = RNA(n+1) + diphosphate. Functionally, promotes RNA polymerase assembly. Latches the N- and C-terminal regions of the beta' subunit thereby facilitating its interaction with the beta and alpha subunits. This Pelotomaculum thermopropionicum (strain DSM 13744 / JCM 10971 / SI) protein is DNA-directed RNA polymerase subunit omega.